Here is a 203-residue protein sequence, read N- to C-terminus: Reticulon-like protein B12 (203 aa).

A Reticulon domain is found at 24 to 203 (VADVMLWRKK…WANPENKKLS (180 aa)). The next 3 membrane-spanning stretches (helical) occupy residues 34–54 (NVSV…EAFA), 55–75 (YTIF…LFLW), and 132–152 (VAVS…QTLC).

It localises to the endoplasmic reticulum membrane. This Arabidopsis thaliana (Mouse-ear cress) protein is Reticulon-like protein B12 (RTNLB12).